Here is a 300-residue protein sequence, read N- to C-terminus: Fatty acid hydroxylase uhd1 (300 aa).

NADP(+) is bound by residues 14 to 20 (GANGFVG), R39, 63 to 64 (DL), 83 to 85 (VAS), Y156, K160, 183 to 186 (PVYI), and S199. K160 (proton donor) is an active-site residue.

It belongs to the NAD(P)-dependent epimerase/dehydratase family. Dihydroflavonol-4-reductase subfamily.

The protein operates within secondary metabolite biosynthesis. In terms of biological role, fatty acid hydroxylase; part of the gene cluster that mediates the biosynthesis of the glycolipid biosurfactant ustilagic acid (UA). UA is a secreted cellobiose glycolipid that is toxic for many microorganisms and confers biocontrol activity to U.maydis. UA consists of 15,16-dihydroxypalmitic or 2,15,16-trihydroxypalmitic acid, which is O-glycosidically linked to cellobiose at its terminal hydroxyl group. In addition, the cellobiose moiety is acetylated and acylated with a short-chain hydroxy fatty acid. UA biosynthesis starts with omega-hydroxylation of palmitic acid catalyzed by the cytochrome P450 monooxygenase cyp1. Terminal hydroxylation of palmitic acid precedes subterminal hydroxylation catalyzed by the cytochrome P450 monooxygenase cyp2. Sequential glucosylation of the hydroxy fatty acid is probably catalyzed by the glycosyltransferase ugt1. The cellobiose lipid is further decorated by acetylation of the proximal glucose residue and by acylation with a short-chain beta-hydroxy fatty acid at the distal glucose residue. The acyltransferase uat1 may be a good candidate for catalyzing either acetylation or acylation of the cellobiose lipid. The fatty acid synthase fas2 may be involved in synthesis of the carbon backbone of the short-chain beta-hydroxy fatty acid esterified to the cellobiose disaccharide. The secreted UA consists of a mixture of both alpha-hydroxylated and non-hydroxylated glycolipids; therefore, alpha-hydroxylation of the long-chain fatty, catalyzed by the fatty acid hydroxylase ahd1, occurs late in UA biosynthesis and may be the last step before secretion. The sequence is that of Fatty acid hydroxylase uhd1 from Mycosarcoma maydis (Corn smut fungus).